Consider the following 184-residue polypeptide: ATP synthase subunit b, chloroplastic (184 aa).

Residues 27 to 49 form a helical membrane-spanning segment; that stretch reads LATNPINLSVVLGVLIFFGKGVL.

It belongs to the ATPase B chain family. As to quaternary structure, F-type ATPases have 2 components, F(1) - the catalytic core - and F(0) - the membrane proton channel. F(1) has five subunits: alpha(3), beta(3), gamma(1), delta(1), epsilon(1). F(0) has four main subunits: a(1), b(1), b'(1) and c(10-14). The alpha and beta chains form an alternating ring which encloses part of the gamma chain. F(1) is attached to F(0) by a central stalk formed by the gamma and epsilon chains, while a peripheral stalk is formed by the delta, b and b' chains.

It localises to the plastid. The protein resides in the chloroplast thylakoid membrane. Functionally, f(1)F(0) ATP synthase produces ATP from ADP in the presence of a proton or sodium gradient. F-type ATPases consist of two structural domains, F(1) containing the extramembraneous catalytic core and F(0) containing the membrane proton channel, linked together by a central stalk and a peripheral stalk. During catalysis, ATP synthesis in the catalytic domain of F(1) is coupled via a rotary mechanism of the central stalk subunits to proton translocation. Component of the F(0) channel, it forms part of the peripheral stalk, linking F(1) to F(0). The protein is ATP synthase subunit b, chloroplastic of Atropa belladonna (Belladonna).